Here is a 421-residue protein sequence, read N- to C-terminus: UV-B-induced protein At3g17800, chloroplastic (421 aa).

2 disordered regions span residues 1–40 (MDAL…RSGS) and 74–95 (VRAS…IAPL). The transit peptide at 1 to 75 (MDALTSSLVR…AKTRRSFVVR (75 aa)) directs the protein to the chloroplast. Positions 16–28 (SRTSDNGSGSMFL) are enriched in polar residues. The span at 74–88 (VRASSASNDASSGSS) shows a compositional bias: low complexity.

It localises to the plastid. Its subcellular location is the chloroplast. In Arabidopsis thaliana (Mouse-ear cress), this protein is UV-B-induced protein At3g17800, chloroplastic.